The chain runs to 143 residues: Transcriptional regulator MraZ (143 aa).

SpoVT-AbrB domains follow at residues 5-47 and 76-119; these read EFLH…PMDE and AIEC…ANDA.

Belongs to the MraZ family. Forms oligomers.

It localises to the cytoplasm. The protein resides in the nucleoid. The polypeptide is Transcriptional regulator MraZ (Oceanobacillus iheyensis (strain DSM 14371 / CIP 107618 / JCM 11309 / KCTC 3954 / HTE831)).